A 478-amino-acid polypeptide reads, in one-letter code: Signal recognition particle receptor FtsY (478 aa).

Composition is skewed to basic and acidic residues over residues 14 to 33 (KDKA…ERGN) and 45 to 56 (AEAHDAVDKDPV). A disordered region spans residues 14 to 94 (KDKAETEERP…DAPLLPGAEL (81 aa)). The span at 71–86 (EAVDVAPAEDDEEEDA) shows a compositional bias: acidic residues. GTP is bound by residues 283 to 290 (GVNGTGKT), 365 to 369 (DTAGR), and 429 to 432 (TKLD).

Belongs to the GTP-binding SRP family. FtsY subfamily. In terms of assembly, part of the signal recognition particle protein translocation system, which is composed of SRP and FtsY. SRP is a ribonucleoprotein composed of Ffh and a 4.5S RNA molecule.

It is found in the cell inner membrane. The protein localises to the cytoplasm. The enzyme catalyses GTP + H2O = GDP + phosphate + H(+). In terms of biological role, involved in targeting and insertion of nascent membrane proteins into the cytoplasmic membrane. Acts as a receptor for the complex formed by the signal recognition particle (SRP) and the ribosome-nascent chain (RNC). Interaction with SRP-RNC leads to the transfer of the RNC complex to the Sec translocase for insertion into the membrane, the hydrolysis of GTP by both Ffh and FtsY, and the dissociation of the SRP-FtsY complex into the individual components. The sequence is that of Signal recognition particle receptor FtsY from Agrobacterium fabrum (strain C58 / ATCC 33970) (Agrobacterium tumefaciens (strain C58)).